Here is a 428-residue protein sequence, read N- to C-terminus: Glutamate-1-semialdehyde 2,1-aminomutase (428 aa).

N6-(pyridoxal phosphate)lysine is present on lysine 267.

This sequence belongs to the class-III pyridoxal-phosphate-dependent aminotransferase family. HemL subfamily. Homodimer. Pyridoxal 5'-phosphate serves as cofactor.

The protein localises to the cytoplasm. It carries out the reaction (S)-4-amino-5-oxopentanoate = 5-aminolevulinate. It functions in the pathway porphyrin-containing compound metabolism; protoporphyrin-IX biosynthesis; 5-aminolevulinate from L-glutamyl-tRNA(Glu): step 2/2. The polypeptide is Glutamate-1-semialdehyde 2,1-aminomutase (Desulforapulum autotrophicum (strain ATCC 43914 / DSM 3382 / VKM B-1955 / HRM2) (Desulfobacterium autotrophicum)).